A 309-amino-acid polypeptide reads, in one-letter code: Pantothenate kinase (309 aa).

Position 92-99 (92-99 (GSVAVGKS)) interacts with ATP.

It belongs to the prokaryotic pantothenate kinase family.

The protein localises to the cytoplasm. It catalyses the reaction (R)-pantothenate + ATP = (R)-4'-phosphopantothenate + ADP + H(+). Its pathway is cofactor biosynthesis; coenzyme A biosynthesis; CoA from (R)-pantothenate: step 1/5. The sequence is that of Pantothenate kinase from Latilactobacillus sakei subsp. sakei (strain 23K) (Lactobacillus sakei subsp. sakei).